A 373-amino-acid chain; its full sequence is Nuclear migration protein JNM1 (373 aa).

Positions 33–53 are disordered; it reads EVKEDGQQEEQEEASSRKDGL. S91 is modified (phosphoserine). Coiled coils occupy residues 114 to 139, 200 to 245, and 331 to 367; these read KIEN…LATE, EDRK…EFEN, and WLKA…EDEA.

As to quaternary structure, component of the dynactin complex composed of at least ARP1, JNM1, NIP100 and ARP10. Dynactin comprises a short rod of ARP1 polymers attached to ARP10 at its pointed-end and probably associated with the capping protein at its barbed-end. The rod structure is implicated in dynein cargo binding. A sidearm formed by NIP100 projects from the ARP1 filament and is implicated in motor binding. Interacts with ARP1.

The protein localises to the cytoplasm. It is found in the cytoskeleton. Component of the dynactin complex which assists cytoplasmic dynein by increasing its processivity and by regulation of its cargo binding. The dynactin complex is required for the spindle translocation late in anaphase and is involved in a cell wall synthesis checkpoint. JNM1 is associated with the rod and links it to the projecting sidearm. Required for proper nuclear migration during the mitotic cell cycle and for astral microtubule development. In Saccharomyces cerevisiae (strain ATCC 204508 / S288c) (Baker's yeast), this protein is Nuclear migration protein JNM1 (JNM1).